The following is a 315-amino-acid chain: DNA-directed RNA polymerase subunit alpha (315 aa).

The alpha N-terminal domain (alpha-NTD) stretch occupies residues 1-228 (MLEIEKPKIE…EHFKLFMTLT (228 aa)). The alpha C-terminal domain (alpha-CTD) stretch occupies residues 245 to 315 (KEKVLEMTIE…LGLGLRKSED (71 aa)).

Belongs to the RNA polymerase alpha chain family. In terms of assembly, homodimer. The RNAP catalytic core consists of 2 alpha, 1 beta, 1 beta' and 1 omega subunit. When a sigma factor is associated with the core the holoenzyme is formed, which can initiate transcription.

The catalysed reaction is RNA(n) + a ribonucleoside 5'-triphosphate = RNA(n+1) + diphosphate. Functionally, DNA-dependent RNA polymerase catalyzes the transcription of DNA into RNA using the four ribonucleoside triphosphates as substrates. This is DNA-directed RNA polymerase subunit alpha from Clostridium botulinum (strain Langeland / NCTC 10281 / Type F).